A 123-amino-acid polypeptide reads, in one-letter code: Large ribosomal subunit protein eL8 (123 aa).

Belongs to the eukaryotic ribosomal protein eL8 family. As to quaternary structure, part of the 50S ribosomal subunit. Probably part of the RNase P complex.

The protein resides in the cytoplasm. Functionally, multifunctional RNA-binding protein that recognizes the K-turn motif in ribosomal RNA, the RNA component of RNase P, box H/ACA, box C/D and box C'/D' sRNAs. This is Large ribosomal subunit protein eL8 from Thermococcus kodakarensis (strain ATCC BAA-918 / JCM 12380 / KOD1) (Pyrococcus kodakaraensis (strain KOD1)).